A 377-amino-acid polypeptide reads, in one-letter code: 8-amino-7-oxononanoate synthase (377 aa).

Arg13 lines the substrate pocket. Position 100-101 (100-101 (GY)) interacts with pyridoxal 5'-phosphate. His125 contacts substrate. Residues Ser171, His199, and Thr228 each contribute to the pyridoxal 5'-phosphate site. Residue Lys231 is modified to N6-(pyridoxal phosphate)lysine. Thr345 lines the substrate pocket.

It belongs to the class-II pyridoxal-phosphate-dependent aminotransferase family. BioF subfamily. In terms of assembly, homodimer. It depends on pyridoxal 5'-phosphate as a cofactor.

It carries out the reaction 6-carboxyhexanoyl-[ACP] + L-alanine + H(+) = (8S)-8-amino-7-oxononanoate + holo-[ACP] + CO2. It participates in cofactor biosynthesis; biotin biosynthesis. Its function is as follows. Catalyzes the decarboxylative condensation of pimeloyl-[acyl-carrier protein] and L-alanine to produce 8-amino-7-oxononanoate (AON), [acyl-carrier protein], and carbon dioxide. The polypeptide is 8-amino-7-oxononanoate synthase (Nitrosococcus oceani (strain ATCC 19707 / BCRC 17464 / JCM 30415 / NCIMB 11848 / C-107)).